The following is a 387-amino-acid chain: O-methyltransferase lepI (387 aa).

135-148 (FENLWPVLMALPDF) contributes to the substrate binding site. Residues 175–195 (CFHWLATQPTRIANFKVLLTD) are substrate binding. Residues 227–228 (GG), Asp252, 275–276 (NF), and Arg291 contribute to the S-adenosyl-L-methionine site.

The protein belongs to the class I-like SAM-binding methyltransferase superfamily. Cation-independent O-methyltransferase family.

In terms of biological role, O-methyltransferase; part of the gene cluster 23 that mediates the biosynthesis of a family of 2-pyridones known as leporins. The hybrid PKS-NRPS synthetase lepA and the enoyl reductase lepG are responsible for fusion of phenylalanine with a hexaketide and subsequent release of the stable tetramic acid precursor, pre-leporin C. Because lepA lacks a designated enoylreductase (ER) domain, the required activity is provided the enoyl reductase lepG. It is possible that the dehydrogenase lepF also participates in production of pre-leporin C. Cytochrome P450 monooxygenase lepH is then required for the ring expansion step to yield leporin C. Leporin C is then presumably further oxidized by the N-hydroxylase lepD to form leporin B. LepI may possess a function in biosynthesis upstream of lepA. Leporin B is further oxidized in the presence of ferric ion to give the leporin B trimer-iron chelate, but whether or not this reaction is catalyzed by an enzyme in the pathway or by ferric ion is not determined yet. This is O-methyltransferase lepI from Aspergillus flavus (strain ATCC 200026 / FGSC A1120 / IAM 13836 / NRRL 3357 / JCM 12722 / SRRC 167).